A 388-amino-acid chain; its full sequence is Probable fatty acid desaturase DES1 (388 aa).

Residues 1–33 (MATTPMTVVDHEAEEAVAKAREDDKSRQVDAFD) are disordered. Basic and acidic residues predominate over residues 9–30 (VDHEAEEAVAKAREDDKSRQVD). 2 helical membrane-spanning segments follow: residues 62 to 82 (LWYVVRDVAAVVALGTAAAAM) and 85 to 105 (WAVWPVYWAVQGTMFWAFFVL). The short motif at 107 to 111 (HDCGH) is the Histidine box-1 element. A helical membrane pass occupies residues 119–139 (TLNSVVGHLLHSFILIPYHGW). Positions 143 to 147 (HRTHH) match the Histidine box-2 motif. The next 3 helical transmembrane spans lie at 177–194 (IRFTAPYPLLLFPLYLFY), 226–246 (WCIMLASLLAMSCAFGPLQVL), and 248–268 (MYGLPYLVFVMWLDLVTYLHH). A Histidine box-3 motif is present at residues 310–314 (HVIHH).

Belongs to the fatty acid desaturase type 1 family. Highly expressed in root hair cells. Barely detected in panicle, shoot apex, stems and leaves.

It localises to the membrane. The protein operates within lipid metabolism; polyunsaturated fatty acid biosynthesis. The protein is Probable fatty acid desaturase DES1 of Sorghum bicolor (Sorghum).